A 433-amino-acid chain; its full sequence is Keratin, type I cytoskeletal 47 kDa (433 aa).

The interval 1 to 73 is head; that stretch reads MSYSTRSISQ…AFNVSVTSNN (73 aa). Residues 74–109 form a coil 1A region; the sequence is GKETMQNLNDRLANYLDRVRSLEQANHELELKIREY. The 312-residue stretch at 74-385 folds into the IF rod domain; that stretch reads GKETMQNLND…RLLEGEDTRF (312 aa). Residues 110 to 127 form a linker 1 region; sequence LDKKAAVGSLDYSGYYNT. The tract at residues 128–219 is coil 1B; sequence INLLRSQIND…KNHEEELAVV (92 aa). Residues 220-242 form a linker 12 region; sequence RSSARGNVDVQVDSAPPVDLAQI. The segment at 243 to 381 is coil 2; that stretch reads MADVRSQYES…ATYRRLLEGE (139 aa). The tail stretch occupies residues 382–433; it reads DTRFSQTETQKAVTIVSKEQSSSSIKKVKTVIEEVVDGKVVSSRVEELTETS.

The protein belongs to the intermediate filament family. As to quaternary structure, heterotetramer of two type I and two type II keratins.

The polypeptide is Keratin, type I cytoskeletal 47 kDa (xk70a) (Xenopus laevis (African clawed frog)).